Here is a 154-residue protein sequence, read N- to C-terminus: Resuscitation-promoting factor RpfD (154 aa).

The chain crosses the membrane as a helical span at residues 21–41 (IVCTVFIETAVVATMFVALLG).

The protein belongs to the transglycosylase family. Rpf subfamily.

It is found in the cell membrane. In terms of biological role, factor that stimulates resuscitation of dormant cells. Has peptidoglycan (PG) hydrolytic activity. PG fragments could either directly activate the resuscitation pathway of dormant bacteria or serve as a substrate for endogenous Rpf, resulting in low molecular weight products with resuscitation activity. The polypeptide is Resuscitation-promoting factor RpfD (rpfD) (Mycobacterium tuberculosis (strain CDC 1551 / Oshkosh)).